The primary structure comprises 632 residues: 1-deoxy-D-xylulose-5-phosphate synthase (632 aa).

Thiamine diphosphate is bound by residues His-87 and 128-130; that span reads GHS. Asp-159 is a binding site for Mg(2+). Thiamine diphosphate is bound by residues 160–161, Asn-188, Phe-295, and Glu-378; that span reads GA. Asn-188 contacts Mg(2+).

Belongs to the transketolase family. DXPS subfamily. Homodimer. Mg(2+) serves as cofactor. It depends on thiamine diphosphate as a cofactor.

The catalysed reaction is D-glyceraldehyde 3-phosphate + pyruvate + H(+) = 1-deoxy-D-xylulose 5-phosphate + CO2. It participates in metabolic intermediate biosynthesis; 1-deoxy-D-xylulose 5-phosphate biosynthesis; 1-deoxy-D-xylulose 5-phosphate from D-glyceraldehyde 3-phosphate and pyruvate: step 1/1. Catalyzes the acyloin condensation reaction between C atoms 2 and 3 of pyruvate and glyceraldehyde 3-phosphate to yield 1-deoxy-D-xylulose-5-phosphate (DXP). The protein is 1-deoxy-D-xylulose-5-phosphate synthase of Pseudomonas fluorescens (strain SBW25).